We begin with the raw amino-acid sequence, 147 residues long: Large ribosomal subunit protein uL13 (147 aa).

It belongs to the universal ribosomal protein uL13 family. Part of the 50S ribosomal subunit.

Functionally, this protein is one of the early assembly proteins of the 50S ribosomal subunit, although it is not seen to bind rRNA by itself. It is important during the early stages of 50S assembly. The chain is Large ribosomal subunit protein uL13 from Kineococcus radiotolerans (strain ATCC BAA-149 / DSM 14245 / SRS30216).